Reading from the N-terminus, the 832-residue chain is SID1 transmembrane family member 2 (832 aa).

A signal peptide spans 1-18 (MIAWRLPLCVLLVASVES). Topologically, residues 19 to 293 (HLGALGPKNV…VSQAVTSEAY (275 aa)) are extracellular. N-linked (GlcNAc...) asparagine glycans are attached at residues Asn-27, Asn-54, Asn-60, Asn-123, Asn-141, and Asn-165. Residues 294–314 (VGGMLFCLGIFLSFYLLTVLL) traverse the membrane as a helical segment. Residues 315–447 (ACWENWRQRK…DKRVLRKKYQ (133 aa)) lie on the Cytoplasmic side of the membrane. Ser-401, Ser-403, and Ser-404 each carry phosphoserine. The chain crosses the membrane as a helical span at residues 448 to 468 (IYFWNIATIAVFYALPVVQLV). At 469-499 (ITYQTVVNVTGNQDICYYNFLCAHPLGNLSA) the chain is on the extracellular side. N-linked (GlcNAc...) asparagine glycosylation is found at Asn-476 and Asn-496. A helical membrane pass occupies residues 500–520 (FNNILSNLGYILLGLLFLLII). Residues 521-546 (LQREINHNRALLRNDLYALECGIPKH) are Cytoplasmic-facing. The chain crosses the membrane as a helical span at residues 547–567 (FGLFYAMGTALMMEGLLSACY). Residues 568–605 (HVCPNYTNFQFDTSFMYMIAGLCMLKLYQKRHPDINAS) are Extracellular-facing. N-linked (GlcNAc...) asparagine glycans are attached at residues Asn-572 and Asn-603. A helical transmembrane segment spans residues 606-626 (AYSAYACLAIVIFFSVLGVVF). At 627–631 (GKGNT) the chain is on the cytoplasmic side. The helical transmembrane segment at 632 to 652 (AFWIVFSVIHIISTLLLSTQL) threads the bilayer. The Extracellular portion of the chain corresponds to 653–688 (YYMGRWKLDSGIFRRILHVLYTDCIRQCSGPLYTDR). The helical transmembrane segment at 689-709 (MVLLVMGNIINWSLAAYGLIM) threads the bilayer. The Cytoplasmic segment spans residues 710-715 (RPNDFA). Residues 716–736 (SYLLAIGICNLLLYFAFYIIM) form a helical membrane-spanning segment. Residues 737 to 746 (KLRSGERIKL) lie on the Extracellular side of the membrane. Residues 747–767 (IPLLCIVCTSVVWGFALFFFF) traverse the membrane as a helical segment. Topologically, residues 768-796 (QGLSTWQKTPAESREHNRDCILLDFFDDH) are cytoplasmic. The chain crosses the membrane as a helical span at residues 797–817 (DIWHFLSSIAMFGSFLVLLTL). Over 818 to 832 (DDDLDTVQRDKIYVF) the chain is Extracellular.

The protein belongs to the SID1 family. Interacts with adapter protein complex 1 (AP-1) and AP-2, but not AP-3 and AP-4. Interacts with LAMP2. Post-translationally, glycosylated. As to expression, widely expressed, including in the liver, brain and kidney (at protein level).

It localises to the lysosome membrane. The protein resides in the cell membrane. Mediates the translocation of RNA and DNA across the lysosomal membrane during RNA and DNA autophagy (RDA), a process in which RNA and DNA is directly imported into lysosomes in an ATP-dependent manner, and degraded. Involved in the uptake of single-stranded oligonucleotides by living cells, a process called gymnosis. In vitro, mediates the uptake of linear DNA more efficiently than that of circular DNA, but exhibits similar uptake efficacy toward RNA and DNA. Binds long double-stranded RNA (dsRNA) (500 - 700 base pairs), but not dsRNA shorter than 100 bp. In Mus musculus (Mouse), this protein is SID1 transmembrane family member 2 (Sidt2).